Here is a 451-residue protein sequence, read N- to C-terminus: DNA double-strand break repair nuclease NurA (451 aa).

2 residues coordinate Mn(2+): D51 and D126.

The protein belongs to the NurA family. As to quaternary structure, homodimer. Interacts with HerA. The cofactor is Mn(2+).

Exonuclease activity is stimulated in the presence of HerA. Its function is as follows. Involved in DNA double-strand break (DSB) repair. Probably acts with HerA to stimulate resection of the 5' strand and produce the long 3' single-strand that is required for RadA loading. Exhibits 5' endonuclease activity and both 5' and 3' exonuclease activities. The protein is DNA double-strand break repair nuclease NurA of Pyrococcus furiosus (strain ATCC 43587 / DSM 3638 / JCM 8422 / Vc1).